The primary structure comprises 285 residues: Protoheme IX farnesyltransferase (285 aa).

8 consecutive transmembrane segments (helical) span residues 19-39 (RIIW…GKLM), 40-60 (PLSI…SMII), 90-110 (AIYV…LDNP), 111-131 (LTSF…TVWL), 135-155 (SPLN…AGYA), 165-185 (SILL…ALAL), 220-240 (IPFA…VAGI), and 265-285 (FKFS…TRLI).

Belongs to the UbiA prenyltransferase family. Protoheme IX farnesyltransferase subfamily.

Its subcellular location is the cell membrane. It catalyses the reaction heme b + (2E,6E)-farnesyl diphosphate + H2O = Fe(II)-heme o + diphosphate. Its pathway is porphyrin-containing compound metabolism; heme O biosynthesis; heme O from protoheme: step 1/1. Functionally, converts heme B (protoheme IX) to heme O by substitution of the vinyl group on carbon 2 of heme B porphyrin ring with a hydroxyethyl farnesyl side group. The chain is Protoheme IX farnesyltransferase from Metallosphaera sedula (strain ATCC 51363 / DSM 5348 / JCM 9185 / NBRC 15509 / TH2).